We begin with the raw amino-acid sequence, 590 residues long: Muscarinic acetylcholine receptor M3 (590 aa).

Topologically, residues 1–67 (MTLHNNNTTS…DPLGGHTIWQ (67 aa)) are extracellular. N-linked (GlcNAc...) asparagine glycans are attached at residues Asn6, Asn7, Asn15, Asn41, Asn48, and Asn53. Residues 68 to 91 (VVFIAFLTGVLALVTIIGNILVIV) traverse the membrane as a helical segment. Residues 92 to 104 (AFKVNKQLKTVNN) lie on the Cytoplasmic side of the membrane. A helical transmembrane segment spans residues 105–125 (YFLLSLACADLIIGVISMNLF). The Extracellular segment spans residues 126 to 142 (TTYIIMNRWALGNLACD). A disulfide bond links Cys141 and Cys221. Residues 143 to 164 (LWLSIDYVASNASVMNLLVISF) form a helical membrane-spanning segment. Over 165 to 184 (DRYFSITRPLTYRAKRTTKR) the chain is Cytoplasmic. Residues 185 to 207 (AGVMIGLAWVISFILWAPAILFW) traverse the membrane as a helical segment. Residues 208–229 (QYFVGKRTVPPGECFIQFLSEP) lie on the Extracellular side of the membrane. Residues 230–252 (TITFGTAIAAFYMPVTIMTILYW) traverse the membrane as a helical segment. Residues 253-492 (RIYKETEKRT…LIKEKKAAQT (240 aa)) are Cytoplasmic-facing. The short motif at 275–281 (AEAENFV) is the Basolateral sorting signal element. A disordered region spans residues 324–357 (AEQMDQDHSSSDSWNNNDAAASLENSASSDEEDI). Residues 334–345 (SDSWNNNDAAAS) show a composition bias toward low complexity. Phosphoserine is present on Ser385. The disordered stretch occupies residues 398–419 (SVGLERKPSKLQTQQSMDDGGS). A compositionally biased stretch (polar residues) spans 407 to 419 (KLQTQQSMDDGGS). Residues 493–513 (LSAILLAFIITWTPYNIMVLV) form a helical membrane-spanning segment. Over 514-527 (NTFCDSCIPKTYWN) the chain is Extracellular. Residues 528 to 547 (LGYWLCYINSTVNPVCYALC) traverse the membrane as a helical segment. Topologically, residues 548–590 (NKTFRNTFKMLLLCQCDKRKRRKQQYQQRQSVIFHKRVPEQAL) are cytoplasmic.

Belongs to the G-protein coupled receptor 1 family. Muscarinic acetylcholine receptor subfamily. CHRM3 sub-subfamily. Homodimer; the dimers can form tetramers. Interacts with NALCN. Interacts with TMEM147.

Its subcellular location is the cell membrane. It localises to the postsynaptic cell membrane. The protein resides in the basolateral cell membrane. It is found in the endoplasmic reticulum membrane. The muscarinic acetylcholine receptor mediates various cellular responses, including inhibition of adenylate cyclase, breakdown of phosphoinositides and modulation of potassium channels through the action of G proteins. Primary transducing effect is Pi turnover. This chain is Muscarinic acetylcholine receptor M3 (CHRM3), found in Bos taurus (Bovine).